The primary structure comprises 389 residues: Endo-chitosanase C (389 aa).

A signal peptide spans 1-22; that stretch reads MPIKSFASRLALSLAICGTAMG. The stretch at 280-313 is one R3-1 repeat; sequence CSWPGHCAGFKNKGATCSSNDDCSDDLACQNGKC. An R3-2 repeat occupies 320–350; it reads ETCSWEGHCKGATCSSNDDCSDELACISGIC. One copy of the R3-3 repeat lies at 357-387; that stretch reads ETCEWEGHCEGASCSSHDDCDGNLACKNGKC.

Belongs to the glycosyl hydrolase 75 family.

It is found in the secreted. The catalysed reaction is Endohydrolysis of beta-(1-&gt;4)-linkages between D-glucosamine residues in a partly acetylated chitosan.. In terms of biological role, chitosanase catalyzing the endo-type cleavage of chitosan, the deacylated form of chitin. Chitosanase may be crucial in the degradation of the deacetylated portion of chitin in the fungal cell wall. Chitoolisaccharides produced by the hydrolysis of partially N-acetylated chitosan are known to have many biological activities, including antibacterial activity, immune-enhancing effects, and elicitor activity. This chain is Endo-chitosanase C (csnC), found in Aspergillus oryzae (strain ATCC 42149 / RIB 40) (Yellow koji mold).